Reading from the N-terminus, the 309-residue chain is Taste receptor type 2 member 31 (309 aa).

Residues 1 to 2 are Extracellular-facing; that stretch reads MI. The helical transmembrane segment at 3 to 23 threads the bilayer; sequence TFLPIIFSILVVVTFVIGNFA. Topologically, residues 24–55 are cytoplasmic; it reads NGFIALVNSTEWVKRQKISFADQILTALAVSR. A helical membrane pass occupies residues 56 to 76; it reads VGLLWVLLLNWYATVLNPAFY. Residues 77–100 are Extracellular-facing; the sequence is SVEVRTTTYNVWAVTNHFSNWLAT. Residues 101–121 traverse the membrane as a helical segment; it reads SLSIFYLLKIANFSNLIFLHL. Over 122–126 the chain is Cytoplasmic; it reads KRRVK. Residues 127–147 traverse the membrane as a helical segment; that stretch reads NVILVMLLGPLLILACHLFMV. The Extracellular portion of the chain corresponds to 148–181; that stretch reads NMNEIVRTKEYEENMTWKYILRNAIYHPGMTVTT. The N-linked (GlcNAc...) asparagine glycan is linked to Asn-161. Residues 182–202 traverse the membrane as a helical segment; it reads LQNLVPFTLTLISFLLLICSL. Residues 203 to 229 are Cytoplasmic-facing; that stretch reads CKHLKKMQLHGKGPQDPSTKVHIKALQ. Residues 230–250 form a helical membrane-spanning segment; it reads IVISFLLLCVIYFVSVIISIW. Topologically, residues 251–259 are extracellular; that stretch reads SFESLGNKP. The helical transmembrane segment at 260-280 threads the bilayer; that stretch reads VFMFCQAIRFSYPSAHPFIVI. At 281-309 the chain is on the cytoplasmic side; it reads WGNKKLKQTFLSVLWNVRYWVKGQKPSSL.

This sequence belongs to the G-protein coupled receptor T2R family.

The protein resides in the membrane. Receptor that may play a role in the perception of bitterness and is gustducin-linked. May play a role in sensing the chemical composition of the gastrointestinal content. The activity of this receptor may stimulate alpha gustducin, mediate PLC-beta-2 activation and lead to the gating of TRPM5. This Papio hamadryas (Hamadryas baboon) protein is Taste receptor type 2 member 31 (TAS2R31).